The sequence spans 276 residues: Large ribosomal subunit protein uL2c (276 aa).

The interval 225–276 is disordered; it reads AMNPVDHPHGGGEGRTPIGRKKPVTPWGYSALGKKSRKRNRYSDASILRRRE.

It belongs to the universal ribosomal protein uL2 family. Part of the 50S ribosomal subunit.

Its subcellular location is the plastid. It is found in the chloroplast. This Pinus thunbergii (Japanese black pine) protein is Large ribosomal subunit protein uL2c (rpl2).